The sequence spans 504 residues: Probable cytosol aminopeptidase (504 aa).

Residues K268 and D273 each coordinate Mn(2+). K280 is a catalytic residue. 3 residues coordinate Mn(2+): D291, D350, and E352. The active site involves R354.

This sequence belongs to the peptidase M17 family. Requires Mn(2+) as cofactor.

It is found in the cytoplasm. The catalysed reaction is Release of an N-terminal amino acid, Xaa-|-Yaa-, in which Xaa is preferably Leu, but may be other amino acids including Pro although not Arg or Lys, and Yaa may be Pro. Amino acid amides and methyl esters are also readily hydrolyzed, but rates on arylamides are exceedingly low.. It catalyses the reaction Release of an N-terminal amino acid, preferentially leucine, but not glutamic or aspartic acids.. Its function is as follows. Presumably involved in the processing and regular turnover of intracellular proteins. Catalyzes the removal of unsubstituted N-terminal amino acids from various peptides. The protein is Probable cytosol aminopeptidase of Psychromonas ingrahamii (strain DSM 17664 / CCUG 51855 / 37).